Reading from the N-terminus, the 457-residue chain is MDINPPPSTAPSSPRRSIQRISDAKNKALTFNRRRLGLIKKAHELSVLCDAKVVVMIFDSKNACHVYSSEEPEEQRDALLQKFLNKDFVTVDPLRNINPNIPSDESLHNWRPKDKRIASVTTYSAQPSNNCSSATDSENDFQSFTIKSSTTYHTTPTTASENKKIESITIPDHASVYNDLPLSPTVKHSFVSPVSGDYSDSPLEPSSSSSFSVPPESLNPTLSFQHNDVPQTDNFIPFLTPKRQAYGQSSSRADRSSVRRSQSFKNRRNGKPRISRLHTSHASIDGLTDFIQSPSSGYLDPSSTPITPLDSAINQITPPFLPDNLGQENRGELYSHDNPTSMVYEHPKFDELPNGFIDTHELNILSRSFTASPNQILRESNMVNQDSFTDNPVDATWDALIGTTQIDLDLDYERSSIPSSTIPADQLKDGVPTNSVYRNNMVDHNLYPSLNIERNAP.

The 61-residue stretch at 11-71 folds into the MADS-box domain; it reads PSSPRRSIQR…NACHVYSSEE (61 aa). 2 disordered regions span residues 195–278 and 295–328; these read SGDY…SRLH and SSGYLDPSSTPITPLDSAINQITPPFLPDNLGQE. The segment covering 199–216 has biased composition (low complexity); that stretch reads SDSPLEPSSSSSFSVPPE. The span at 218 to 234 shows a compositional bias: polar residues; sequence LNPTLSFQHNDVPQTDN. Residues 265–278 show a composition bias toward basic residues; the sequence is KNRRNGKPRISRLH. Over residues 295-317 the composition is skewed to polar residues; that stretch reads SSGYLDPSSTPITPLDSAINQIT. At S372 the chain carries Phosphoserine.

Post-translationally, phosphorylated. Occurs periodically during mitosis.

The protein localises to the nucleus. In terms of biological role, acts as a transcriptional activator with a role in the regulation of mitosis. Regulates septation and the periodic transcription of cdc15. The protein is MADS-box transcription factor 1 (mbx1) of Schizosaccharomyces pombe (strain 972 / ATCC 24843) (Fission yeast).